The chain runs to 232 residues: Large ribosomal subunit protein uL1 (232 aa).

It belongs to the universal ribosomal protein uL1 family. As to quaternary structure, part of the 50S ribosomal subunit.

Binds directly to 23S rRNA. The L1 stalk is quite mobile in the ribosome, and is involved in E site tRNA release. Functionally, protein L1 is also a translational repressor protein, it controls the translation of the L11 operon by binding to its mRNA. The chain is Large ribosomal subunit protein uL1 from Alkaliphilus metalliredigens (strain QYMF).